A 325-amino-acid chain; its full sequence is tRNA(Ile)-lysidine synthase (325 aa).

34 to 39 (SGGQDS) lines the ATP pocket.

Belongs to the tRNA(Ile)-lysidine synthase family.

It localises to the cytoplasm. The catalysed reaction is cytidine(34) in tRNA(Ile2) + L-lysine + ATP = lysidine(34) in tRNA(Ile2) + AMP + diphosphate + H(+). Functionally, ligates lysine onto the cytidine present at position 34 of the AUA codon-specific tRNA(Ile) that contains the anticodon CAU, in an ATP-dependent manner. Cytidine is converted to lysidine, thus changing the amino acid specificity of the tRNA from methionine to isoleucine. The polypeptide is tRNA(Ile)-lysidine synthase (Synechococcus sp. (strain ATCC 27144 / PCC 6301 / SAUG 1402/1) (Anacystis nidulans)).